The primary structure comprises 96 residues: Co-chaperonin GroES (96 aa).

It belongs to the GroES chaperonin family. In terms of assembly, heptamer of 7 subunits arranged in a ring. Interacts with the chaperonin GroEL.

The protein resides in the cytoplasm. Together with the chaperonin GroEL, plays an essential role in assisting protein folding. The GroEL-GroES system forms a nano-cage that allows encapsulation of the non-native substrate proteins and provides a physical environment optimized to promote and accelerate protein folding. GroES binds to the apical surface of the GroEL ring, thereby capping the opening of the GroEL channel. This is Co-chaperonin GroES from Haemophilus influenzae (strain PittGG).